A 72-amino-acid chain; its full sequence is Translation initiation factor IF-1 (72 aa).

Positions 1–72 constitute an S1-like domain; it reads MAKEDVIEVE…NRGRIVYRYK (72 aa).

Belongs to the IF-1 family. As to quaternary structure, component of the 30S ribosomal translation pre-initiation complex which assembles on the 30S ribosome in the order IF-2 and IF-3, IF-1 and N-formylmethionyl-tRNA(fMet); mRNA recruitment can occur at any time during PIC assembly.

Its subcellular location is the cytoplasm. In terms of biological role, one of the essential components for the initiation of protein synthesis. Stabilizes the binding of IF-2 and IF-3 on the 30S subunit to which N-formylmethionyl-tRNA(fMet) subsequently binds. Helps modulate mRNA selection, yielding the 30S pre-initiation complex (PIC). Upon addition of the 50S ribosomal subunit IF-1, IF-2 and IF-3 are released leaving the mature 70S translation initiation complex. This chain is Translation initiation factor IF-1, found in Moorella thermoacetica (strain ATCC 39073 / JCM 9320).